Here is a 476-residue protein sequence, read N- to C-terminus: MIAPDLTMDIPTELGRVHFVGIGGSGMSGIARLFLAAGHRVTGSDSRDSDAVQALRELGAEIHVGHDAAHVGDADALVVTGALWQDNPEYVLAKERGLPILHRSQALAWLISGQRLVAVAGAHGKTTSTGMIVTALLEAGRDPSFVNGGVIGGLGVSSAPGSEELFVVEADESDGSFLLYDTSVALITNVDADHLDHYGSHEAFDDAFVRFASAASELVVISSDDPGARRVTARIEGRVVTFGEDPAADIRITDIVTDGPVAFTLTHDGVSRRAALRVPGRHNAINAAGAYAVLVGLGVDPDDAIAGLAGFSGTGRRFELHAEVRGVSVYDDYAHHPTEVRAALEAARTVVGEGRIIAVHQPHLYSRTRMMAGDFARVYEELADHTIVLDVFGAREDPIPGVTGALVSECFEDAGHVDYLPDWQEAADRAAEIARDGDFIVTLSCGDVYRIIPQVIAALERPAGSPQPAASSRPRE.

121–127 contacts ATP; that stretch reads GAHGKTT.

This sequence belongs to the MurCDEF family.

It localises to the cytoplasm. The enzyme catalyses UDP-N-acetyl-alpha-D-muramate + L-alanine + ATP = UDP-N-acetyl-alpha-D-muramoyl-L-alanine + ADP + phosphate + H(+). It participates in cell wall biogenesis; peptidoglycan biosynthesis. Its function is as follows. Cell wall formation. The protein is UDP-N-acetylmuramate--L-alanine ligase of Clavibacter michiganensis subsp. michiganensis (strain NCPPB 382).